The following is a 649-amino-acid chain: MMNQPLIELKNIVRRYGHGDTETTVLKSINLKIYAGEMVAIVGASGSGKSTLMNLLGVLDQADDGEYLFRGRQISTLSSDELADLRCYHFGFVFQRYHLLPHLTAVENVEIPAIYSAMEKEKRIERAQKLLCRLGLENQLKHKPSQLSGGQQQRVSIARALMNGGEIILADEPTGALDSQSSQEVLSVLKTLNHQGHTVVLITHDMQIASHADRIITMKDGEIIADSGVTQNLMKSSAQEVTPQLSSMHYLATLRRYHAAFLMAMHMMFAHKIRTLLTMLGIIIGIAAVVCVIALGEGAKNKVLAEFSALGNNTIDIYPGKNWGDPDAIKIQTLNQVDLALLRQQPYLKGATPQISVDLPLRFLNRTVNASVYGVSDAFFQLRKHRLLSGRWFNAHDMATHQAVSVIDKKSQQVIFGTESAVGKTVFIGQIPILIVGVVETPPQNIEGQRATIWLPYNTVVSRLYNQSYFQQITVQVKEHIAPDLAEKAIIDLLTIQHGRKDFFTFSSRKFLQSLQRTTQTLTMMISSIAFISLVVGGIGVMNIMLVSVIERTREIGIRVAVGAKEKDILHQFLIESASVSLLGGMLGVLLSLLLGGLFSAFTDSIKMQFTFSSFLIAFVCSSMIGMIFGYFPARNAARLKPVVALSQE.

Residues 7 to 245 (IELKNIVRRY…SSAQEVTPQL (239 aa)) form the ABC transporter domain. ATP is bound at residue 43-50 (GASGSGKS). 4 helical membrane passes run 276 to 296 (LLTM…IALG), 529 to 549 (IAFI…LVSV), 582 to 602 (LLGG…FSAF), and 612 to 632 (FSSF…FGYF).

Belongs to the ABC transporter superfamily. Macrolide exporter (TC 3.A.1.122) family. Homodimer. Part of the tripartite efflux system MacAB-TolC, which is composed of an inner membrane transporter, MacB, a periplasmic membrane fusion protein, MacA, and an outer membrane component, TolC. The complex forms a large protein conduit and can translocate molecules across both the inner and outer membranes. Interacts with MacA.

It is found in the cell inner membrane. Its function is as follows. Part of the tripartite efflux system MacAB-TolC. MacB is a non-canonical ABC transporter that contains transmembrane domains (TMD), which form a pore in the inner membrane, and an ATP-binding domain (NBD), which is responsible for energy generation. Confers resistance against macrolides. The sequence is that of Macrolide export ATP-binding/permease protein MacB from Pasteurella multocida (strain Pm70).